Consider the following 73-residue polypeptide: MKSEIKKNDMVKVIAGDDKGKVAKVLAVLPKTSQVVVEGCKVVKKAIKPTDDNPKGGFIHKEKPMHISNVKKA.

Residues 51–65 (DDNPKGGFIHKEKPM) are compositionally biased toward basic and acidic residues. Residues 51–73 (DDNPKGGFIHKEKPMHISNVKKA) are disordered.

Belongs to the universal ribosomal protein uL24 family. As to quaternary structure, part of the 50S ribosomal subunit.

Its function is as follows. One of two assembly initiator proteins, it binds directly to the 5'-end of the 23S rRNA, where it nucleates assembly of the 50S subunit. One of the proteins that surrounds the polypeptide exit tunnel on the outside of the subunit. The protein is Large ribosomal subunit protein uL24 of Helicobacter pylori (strain Shi470).